A 341-amino-acid chain; its full sequence is uncharacterized protein (341 aa).

Positions 153-179 (AYTLSEKVMNAEREAEETRETIIREAH) form a coiled coil. The segment covering 319-335 (EQLQNPAPESAPSTSKT) has biased composition (polar residues). The interval 319-341 (EQLQNPAPESAPSTSKTLRSKNP) is disordered.

This is an uncharacterized protein from Coxiella burnetii (strain RSA 493 / Nine Mile phase I).